The chain runs to 593 residues: A-type ATP synthase subunit A (593 aa).

236–243 (GPFGSGKT) lines the ATP pocket.

It belongs to the ATPase alpha/beta chains family. Has multiple subunits with at least A(3), B(3), C, D, E, F, H, I and proteolipid K(x).

The protein localises to the cell membrane. It catalyses the reaction ATP + H2O + 4 H(+)(in) = ADP + phosphate + 5 H(+)(out). Functionally, component of the A-type ATP synthase that produces ATP from ADP in the presence of a proton gradient across the membrane. The A chain is the catalytic subunit. This Pyrobaculum islandicum (strain DSM 4184 / JCM 9189 / GEO3) protein is A-type ATP synthase subunit A.